The chain runs to 952 residues: Translation initiation factor IF-2 (952 aa).

4 disordered regions span residues 74-95, 153-204, 230-256, and 273-319; these read QRRLSRLEEQSRKTYEKERQLK, AAQA…KEEP, MHSPFDRSSEAERKKKNRKKNFKEQAD, and DEKG…DVND. Over residues 153-168 the composition is skewed to low complexity; the sequence is AAQADQTDQTDQTDQA. Residues 232–242 show a composition bias toward basic and acidic residues; it reads SPFDRSSEAER. The span at 286–303 shows a compositional bias: low complexity; it reads PGETNAATPAGTASTAGA. In terms of domain architecture, tr-type G spans 449–619; that stretch reads IRPPVITIMG…LAEAEIRELK (171 aa). Residues 458 to 465 are G1; it reads GHVDHGKT. GTP is bound at residue 458–465; the sequence is GHVDHGKT. The interval 483-487 is G2; that stretch reads GITQH. The tract at residues 505–508 is G3; it reads DTPG. GTP is bound by residues 505-509 and 559-562; these read DTPGH and NKVD. The G4 stretch occupies residues 559–562; the sequence is NKVD. Residues 595–597 are G5; that stretch reads SAK.

Belongs to the TRAFAC class translation factor GTPase superfamily. Classic translation factor GTPase family. IF-2 subfamily.

Its subcellular location is the cytoplasm. In terms of biological role, one of the essential components for the initiation of protein synthesis. Protects formylmethionyl-tRNA from spontaneous hydrolysis and promotes its binding to the 30S ribosomal subunits. Also involved in the hydrolysis of GTP during the formation of the 70S ribosomal complex. The sequence is that of Translation initiation factor IF-2 from Chlorobium limicola (strain DSM 245 / NBRC 103803 / 6330).